The primary structure comprises 737 residues: tRNA (guanine(27)-N(2))-dimethyltransferase (737 aa).

Residues Met1 to Leu10 show a composition bias toward acidic residues. A disordered region spans residues Met1–Leu65. A compositionally biased stretch (low complexity) spans Val17–Pro49. Thr24 carries the post-translational modification Phosphothreonine. The span at Ala50–Ala62 shows a compositional bias: pro residues. Ser72 bears the Phosphoserine mark. Positions His141–Arg145 match the Nucleolar localization signal motif. The C2H2-type zinc-finger motif lies at Tyr190–His212. The Trm1 methyltransferase domain occupies Glu233–Leu692. Positions 266, 313, 363, and 364 each coordinate S-adenosyl-L-methionine. Zn(2+) contacts are provided by Cys494, Cys497, Cys519, and Cys521. Lys589 participates in a covalent cross-link: Glycyl lysine isopeptide (Lys-Gly) (interchain with G-Cter in SUMO2). Ser616 carries the post-translational modification Phosphoserine.

Belongs to the class I-like SAM-binding methyltransferase superfamily. Trm1 family.

It localises to the nucleus. It is found in the nucleolus. The enzyme catalyses guanosine(27) in tRNA(Tyr) + 2 S-adenosyl-L-methionine = N(2)-dimethylguanosine(27) in tRNA(Tyr) + 2 S-adenosyl-L-homocysteine + 2 H(+). Specifically dimethylates a single guanine residue at position 27 of tRNA(Tyr) using S-adenosyl-L-methionine as donor of the methyl groups. Dimethylation at position 27 of tRNA(Tyr) is required for efficient translation of tyrosine codons. Also required to maintain 3-(3-amino-3-carboxypropyl)uridine (acp3U) in the D-loop of several cytoplasmic tRNAs. The chain is tRNA (guanine(27)-N(2))-dimethyltransferase (TRMT1L) from Bos taurus (Bovine).